A 133-amino-acid chain; its full sequence is Profilin-3 (133 aa).

It belongs to the profilin family. Occurs in many kinds of cells as a complex with monomeric actin in a 1:1 ratio.

The protein localises to the cytoplasm. Its subcellular location is the cytoskeleton. Its function is as follows. Binds to actin and affects the structure of the cytoskeleton. At high concentrations, profilin prevents the polymerization of actin, whereas it enhances it at low concentrations. By binding to PIP2, it inhibits the formation of IP3 and DG. The polypeptide is Profilin-3 (Ambrosia artemisiifolia (Common ragweed)).